The chain runs to 1150 residues: DNA polymerase (1150 aa).

Residues 1 to 53 (MSLVQGHGTSGLFTEPPNPINQQESSGPSLPAQDAAQAFASSPRAGATSTIVN) are disordered.

It belongs to the DNA polymerase type-B family. In terms of assembly, heterodimer with the terminal protein; this heterodimer binds to bp 9 to 18 of the genome. Forms a complex with viral pTP, DBP and hosts NFIA and POU2F1/OCT1 for initiation of replication.

It localises to the host nucleus. It catalyses the reaction DNA(n) + a 2'-deoxyribonucleoside 5'-triphosphate = DNA(n+1) + diphosphate. Its function is as follows. Eukaryotic-type DNA polymerase involved in viral genomic replication. DNA synthesis is protein primed, and acts in a strand displacement replication. Assembles in complex with viral pTP, DBP, host NFIA and host POU2F1/OCT1 on viral origin of replication. The polymerase covalently transfers dCMP onto pTP, thereby initiating complementary strand synthesis. The sequence is that of DNA polymerase from Canis lupus familiaris (Dog).